The primary structure comprises 152 residues: ALK and LTK ligand 2 (152 aa).

The signal sequence occupies residues 1–24 (MRGPGHPLLLGLLLVLGAAGRGRG). Intrachain disulfides connect Cys111/Cys147 and Cys125/Cys134.

Belongs to the ALKAL family. Homodimer; interchain disulfide bond is not required for homodimerization. In terms of tissue distribution, widely expressed with highest levels in adrenal gland and modest levels in pancreas, testis and uterus.

It localises to the secreted. The protein localises to the cell membrane. Its function is as follows. Cytokine that acts as a physiological ligand for receptor tyrosine kinases LTK and ALK, leading to their activation. Cytokine-binding is sufficient to activate LTK. In contrast, ALKAL2-driven activation of ALK is coupled with heparin-binding to ALK. Stimulation of ALK signaling is involved in neural development and regulation of energy expenditure. In Homo sapiens (Human), this protein is ALK and LTK ligand 2.